Here is a 78-residue protein sequence, read N- to C-terminus: Mambalgin-1 (78 aa).

Positions 1 to 21 (MKTLLLTLLVVTIVCLDLGYS) are cleaved as a signal peptide. 4 cysteine pairs are disulfide-bonded: Cys-24-Cys-40, Cys-33-Cys-58, Cys-62-Cys-70, and Cys-71-Cys-76.

It belongs to the three-finger toxin family. Short-chain subfamily. Mambalgin sub-subfamily. Expressed by the venom gland.

It is found in the secreted. In terms of biological role, this three-finger toxin inhibits ASIC channels. It acts as a gating modifier toxin by decreasing the apparent proton sensitivity of activation and by slightly increasing the apparent proton sensitivity for inactivation. It binds more tightly to the closed state and to a much lesser extent the inactivated/desensitized state of ASIC1a isoform of ASIC1. It interacts directly with the outside surface of the thumb domain of chicken ASIC1a (ASIC1a), but does not insert into the acidic pocket as suggested for mambalgin-2. This binding leads to relocation of the thumb domain that could disrupt the acidic pocket of cASIC1a. It reversibly inhibits rat ASIC1a (IC(50)=3.4-55 nM), rat ASIC1a-ASIC2b (IC(50)=61 nM), rat ASIC1a-ASIC1b (IC(50)=72 nM), human ASIC1a (IC(50)=127-580 nM), chicken ASIC1a (IC(50)=123.6 nM), rat ASIC1b (IC(50)=22.2-203 nM), rat ASIC1a-ASIC2a (IC(50)=152-252 nM). In vivo, it shows a potent naloxone-resistant analgesic effect against acute and inflammatory pain upon central and peripheral injection. In addition, it also has an opioid-independent effect on both thermal and mechanical inflammatory pain after systemic administration and is effective against neuropathic pain. In Dendroaspis polylepis polylepis (Black mamba), this protein is Mambalgin-1.